The following is a 68-amino-acid chain: uncharacterized protein (68 aa).

Residues 1-42 (MHLCQNGHYYKPHRASAEKVPYLKKKKKNSRNEGKAKKKNEK) form a disordered region.

This is an uncharacterized protein from Saccharomyces cerevisiae (strain ATCC 204508 / S288c) (Baker's yeast).